A 215-amino-acid polypeptide reads, in one-letter code: Ras-related protein Rab-5A (215 aa).

GTP is bound by residues S29, A30, G32, K33, S34, S35, H46, E47, T52, and G78. S34 contributes to the Mg(2+) binding site. Short sequence motifs (switch) lie at residues 44–56 and 77–93; these read QFHE…IGAA and AGQE…YRGA. T52 is a binding site for Mg(2+). Position 84 is a phosphoserine (S84). GTP contacts are provided by N133, K134, D136, A164, and K165. A disordered region spans residues 181–215; the sequence is LPKNEPQNPGANSARGRGVDLTEPAQPARSQCCSN. 2 S-geranylgeranyl cysteine lipidation sites follow: C212 and C213.

The protein belongs to the small GTPase superfamily. Rab family. As to quaternary structure, interacts with GDI1; this promotes dissociation from membranes; phosphorylation at Ser-84 disrupts this interaction. Interacts with GDI2; phosphorylation at Ser-84 disrupts the interaction. Interacts with EEA1. Interacts with RIN1 and GAPVD1, which regulate its pathway, probably by acting as a GEF. Interacts with RINL. Interacts with ALS2CL, SUN2, ZFYVE20 and RUFY1. Interacts with RABEP1; one RABEP1 homodimer binds two RAB5A chains, but at opposite sides of the dimer. Interacts with SGSM1 and SGSM3. Interacts with PIK3CB. Interacts with OCRL and INPP5F. May be a component of a complex composed of RAB5A, DYN2 and PIK3C3. Does not interact with BLOC-3 complex (heterodimer of HPS1 and HPS4). Interacts with CLN5. Interacts with APPL2. Interacts with F8A1/F8A2/F8A3. Found in a complex with F8A1/F8A2/F8A3, HTT and RAB5A; mediates the recruitment of HTT by RAB5A onto early endosomes. Interacts with ATP9A. Interacts with PPP1R21; mediates the recruitment of FERRY complex by RAB5A onto early endosomes. Mg(2+) serves as cofactor. Phosphorylation of Ser-84 in the switch II region by LRRK2 prevents the association of RAB regulatory proteins, including RAB GDP dissociation inhibitors GDI1 and GDI2.

The protein resides in the cell membrane. It localises to the early endosome membrane. It is found in the melanosome. The protein localises to the cytoplasmic vesicle. Its subcellular location is the cell projection. The protein resides in the ruffle. It localises to the membrane. It is found in the cytoplasm. The protein localises to the cytosol. Its subcellular location is the phagosome membrane. The protein resides in the endosome membrane. It carries out the reaction GTP + H2O = GDP + phosphate + H(+). Its activity is regulated as follows. Regulated by guanine nucleotide exchange factors (GEFs) including RINL, which promote the exchange of bound GDP for free GTP. Regulated by GTPase activating proteins (GAPs) which increase the GTP hydrolysis activity. Inhibited by GDP dissociation inhibitors (GDIs). In terms of biological role, the small GTPases Rab are key regulators of intracellular membrane trafficking, from the formation of transport vesicles to their fusion with membranes. Rabs cycle between an inactive GDP-bound form and an active GTP-bound form that is able to recruit to membranes different sets of downstream effectors directly responsible for vesicle formation, movement, tethering and fusion. RAB5A is required for the fusion of plasma membranes and early endosomes. Contributes to the regulation of filopodia extension. Required for the exosomal release of SDCBP, CD63, PDCD6IP and syndecan. Regulates maturation of apoptotic cell-containing phagosomes, probably downstream of DYN2 and PIK3C3. This Mus musculus (Mouse) protein is Ras-related protein Rab-5A.